The sequence spans 87 residues: Elastase inhibitor AFLEI (87 aa).

The N-terminal stretch at methionine 1–alanine 19 is a signal peptide. Cysteine 24 and cysteine 86 form a disulfide bridge.

The protein resides in the secreted. Elastase inhibitor. This chain is Elastase inhibitor AFLEI, found in Aspergillus fumigatus (strain CBS 144.89 / FGSC A1163 / CEA10) (Neosartorya fumigata).